The chain runs to 960 residues: Gamma-aminobutyric acid type B receptor subunit 1 (960 aa).

An N-terminal signal peptide occupies residues M1–A19. Topologically, residues Q20–L590 are extracellular. N-linked (GlcNAc...) asparagine glycans are attached at residues N23 and N83. Sushi domains follow at residues C29–C95 and R97–V158. Disulfide bonds link C99-C144, C130-C156, and C219-C245. The 4-aminobutanoate site is built by S246, S269, H286, and Y366. The cysteines at positions 375 and 409 are disulfide-linked. Residues N408 and N439 are each glycosylated (N-linked (GlcNAc...) asparagine). E465 serves as a coordination point for 4-aminobutanoate. N-linked (GlcNAc...) asparagine glycosylation is found at N481, N501, and N513. The helical transmembrane segment at F591–F611 threads the bilayer. Topologically, residues N612–N630 are cytoplasmic. A helical membrane pass occupies residues L631–Y651. The Extracellular portion of the chain corresponds to H652–L666. A helical membrane pass occupies residues W667–V687. The Cytoplasmic portion of the chain corresponds to H688 to L709. A helical transmembrane segment spans residues Y710–V730. Residues D731–T767 lie on the Extracellular side of the membrane. A helical membrane pass occupies residues W768 to Y788. Topologically, residues E789 to A803 are cytoplasmic. The helical transmembrane segment at V804–I824 threads the bilayer. Residues L825 to A832 lie on the Extracellular side of the membrane. The helical transmembrane segment at F833–V853 threads the bilayer. The Cytoplasmic segment spans residues P854 to K960. 2 disordered regions span residues Q866–E891 and V908–K960. A compositionally biased stretch (polar residues) spans S867–T879. Positions E868–R924 form a coiled coil. A Phosphothreonine modification is found at T872. Residues S887–L915 are interaction with ATF4. The residue at position 929 (T929) is a Phosphothreonine.

It belongs to the G-protein coupled receptor 3 family. GABA-B receptor subfamily. In terms of assembly, heterodimer of GABBR1 and GABBR2. Homodimers may form, but are inactive. Interacts (via C-terminus) with ATF4 (via leucine zipper domain). Interacts with JAKMIP1. Interacts with KCTD8, KCTD12, KCTD12B and KCTD16; this interaction determines the pharmacology and kinetics of the receptor response, the KCTD proteins markedly accelerating the GABA-B response, although to different extents. As to expression, expressed in neuronal tissue including cortex, cerebellum and spinal cord. Not detected in non-neuronal tissues including heart, liver, spleen and kidney.

The protein localises to the cell membrane. It is found in the postsynaptic cell membrane. It localises to the cell projection. The protein resides in the dendrite. Component of a heterodimeric G-protein coupled receptor for GABA, formed by GABBR1 and GABBR2. Within the heterodimeric GABA receptor, only GABBR1 seems to bind agonists, while GABBR2 mediates coupling to G proteins. Ligand binding causes a conformation change that triggers signaling via guanine nucleotide-binding proteins (G proteins) and modulates the activity of down-stream effectors, such as adenylate cyclase. Signaling inhibits adenylate cyclase, stimulates phospholipase A2, activates potassium channels, inactivates voltage-dependent calcium-channels and modulates inositol phospholipid hydrolysis. Calcium is required for high affinity binding to GABA. Plays a critical role in the fine-tuning of inhibitory synaptic transmission. Pre-synaptic GABA receptor inhibits neurotransmitter release by down-regulating high-voltage activated calcium channels, whereas postsynaptic GABA receptor decreases neuronal excitability by activating a prominent inwardly rectifying potassium (Kir) conductance that underlies the late inhibitory postsynaptic potentials. Not only implicated in synaptic inhibition but also in hippocampal long-term potentiation, slow wave sleep, muscle relaxation and antinociception. This Mus musculus (Mouse) protein is Gamma-aminobutyric acid type B receptor subunit 1 (Gabbr1).